The chain runs to 776 residues: Microtubule-associated protein tau (776 aa).

The span at M1 to Q26 shows a compositional bias: basic and acidic residues. Positions M1–V591 are disordered. At A2 the chain carries N-acetylalanine. Residues Y18 and Y29 each carry the phosphotyrosine modification. K44 participates in a covalent cross-link: Glycyl lysine isopeptide (Lys-Gly) (interchain with G-Cter in ubiquitin). Phosphoserine occurs at positions 46 and 61. Polar residues predominate over residues S61–T71. Residues T69, T71, and T111 each carry the phosphothreonine modification. Basic and acidic residues-rich tracts occupy residues E179–K189 and G207–E216. Over residues E217–S228 the composition is skewed to acidic residues. The span at E314–G323 shows a compositional bias: basic and acidic residues. Residues A325–P340 are compositionally biased toward low complexity. Basic and acidic residues-rich tracts occupy residues E344–E356 and K381–A393. Residues V442 to G453 are compositionally biased toward low complexity. Over residues K455 to T466 the composition is skewed to basic and acidic residues. A Phosphothreonine modification is found at T470. Residue R472 is modified to Omega-N-methylarginine. K480 is subject to N6,N6-dimethyllysine; alternate. The residue at position 480 (K480) is an N6-acetyllysine; alternate. T486, T492, and T498 each carry phosphothreonine. 3 positions are modified to phosphoserine: S502, S526, and S530. Residues K517–D528 are compositionally biased toward basic and acidic residues. A compositionally biased stretch (low complexity) spans R529–S549. Y532 bears the Phosphotyrosine mark. 3 positions are modified to phosphoserine: S533, S534, and S537. Phosphothreonine is present on residues T540 and T547. S549 is subject to Phosphoserine. T552 bears the Phosphothreonine mark. An N6-acetyllysine modification is found at K560. T566 carries the post-translational modification Phosphothreonine. A phosphoserine mark is found at S570 and S572. Tau/MAP repeat units follow at residues Q579–K609, V610–S640, V641–Q671, and V672–N703. A Glycyl lysine isopeptide (Lys-Gly) (interchain with G-Cter in ubiquitin) cross-link involves residue K589. Residue K594 is modified to N6-acetyllysine; alternate. K594 bears the N6-methyllysine; alternate mark. K594 participates in a covalent cross-link: Glycyl lysine isopeptide (Lys-Gly) (interchain with G-Cter in ubiquitin); alternate. At S597 the chain carries Phosphoserine. Residue K602 forms a Glycyl lysine isopeptide (Lys-Gly) (interchain with G-Cter in ubiquitin) linkage. K616 is subject to N6-acetyllysine; alternate. Residue K616 forms a Glycyl lysine isopeptide (Lys-Gly) (interchain with G-Cter in ubiquitin); alternate linkage. Residues S620 and S624 each carry the phosphoserine modification. Position 625 is an N6-acetyllysine (K625). A Phosphoserine modification is found at S628. K633 carries the post-translational modification N6-acetyllysine; alternate. Residue K633 forms a Glycyl lysine isopeptide (Lys-Gly) (interchain with G-Cter in ubiquitin); alternate linkage. S640 is modified (phosphoserine). Residue K646 is modified to N6,N6-dimethyllysine; alternate. 3 positions are modified to N6-acetyllysine; alternate: K646, K652, and K656. Residues K646, K652, and K656 each participate in a glycyl lysine isopeptide (Lys-Gly) (interchain with G-Cter in ubiquitin); alternate cross-link. S659 is modified (phosphoserine). N6-acetyllysine; alternate occurs at positions 666, 678, and 682. Glycyl lysine isopeptide (Lys-Gly) (interchain with G-Cter in ubiquitin); alternate cross-links involve residues K666, K678, and K682. R684 carries the post-translational modification Omega-N-methylarginine. S687 bears the Phosphoserine mark. K688 participates in a covalent cross-link: Glycyl lysine isopeptide (Lys-Gly) (interchain with G-Cter in ubiquitin). S691 is modified (phosphoserine). Residue K704 is modified to N6-acetyllysine; alternate. A Glycyl lysine isopeptide (Lys-Gly) (interchain with G-Cter in ubiquitin); alternate cross-link involves residue K704. K710 is covalently cross-linked (Glycyl lysine isopeptide (Lys-Gly) (interchain with G-Cter in ubiquitin)). K720 is modified (N6-acetyllysine; alternate). Residue K720 forms a Glycyl lysine isopeptide (Lys-Gly) (interchain with G-Cter in ubiquitin); alternate linkage. Y729 carries the post-translational modification Phosphotyrosine. Residues S731 and S735 each carry the phosphoserine modification. Residues V733 to I752 form a disordered region. A compositionally biased stretch (polar residues) spans G736–S751. T738 is modified (phosphothreonine). Residues S739, S744, S751, and S757 each carry the phosphoserine modification. T762 is modified (phosphothreonine).

Interacts with MARK1, MARK2, MARK3 and MARK4. Interacts with SQSTM1 when polyubiquitinated. Interacts with PSMC2 through SQSTM1. Interacts with FKBP4. Binds to CSNK1D. Interacts with SGK1. Interacts with EPM2A; the interaction dephosphorylates MAPT at Ser-396. Interacts with PIN1. Interacts with LRRK2. Interacts with LRP1, leading to endocytosis; this interaction is reduced in the presence of LRPAP1/RAP. Polyubiquitinated. Requires functional TRAF6 and may provoke SQSTM1-dependent degradation by the proteasome. In terms of processing, phosphorylation at various serine and threonine residues in S-P or T-P motifs by proline-directed protein kinases (PDPK1, CDK1, CDK5, GSK3, MAPK) (a few sites per protein in interphase, more in mitosis), and at serine residues in K-X-G-S motifs by MAP/microtubule affinity-regulating kinase (MARK1, MARK2, MARK3 or MARK4), causing detachment from microtubules, and their disassembly. Phosphorylation at Ser-597 by BRSK1 and BRSK2 in neurons affects ability to bind microtubules and plays a role in neuron polarization. Phosphorylated by PHK. Dephosphorylation at several serine and threonine residues by the serine/threonine phosphatase PPP5C.

The protein resides in the cytoplasm. Its subcellular location is the cytosol. It localises to the cell membrane. The protein localises to the cytoskeleton. It is found in the cell projection. The protein resides in the axon. Its subcellular location is the dendrite. In terms of biological role, promotes microtubule assembly and stability, and might be involved in the establishment and maintenance of neuronal polarity. The C-terminus binds axonal microtubules while the N-terminus binds neural plasma membrane components, suggesting that tau functions as a linker protein between both. Axonal polarity is predetermined by tau localization (in the neuronal cell) in the domain of the cell body defined by the centrosome. The short isoforms allow plasticity of the cytoskeleton whereas the longer isoforms may preferentially play a role in its stabilization. The polypeptide is Microtubule-associated protein tau (MAPT) (Hylobates lar (Lar gibbon)).